The primary structure comprises 393 residues: Isocitrate dehydrogenase [NAD] subunit gamma, mitochondrial (393 aa).

Residues 1-39 (MALKVATVAGSAAKAVLGPALLCRPWEVLGAHEVPSRNI) constitute a mitochondrion transit peptide. Citrate contacts are provided by Thr120 and Asn133. Substrate is bound by residues Arg136, Arg167, and Asp254. Asp254 contacts Mn(2+). Positions 312, 313, and 324 each coordinate ADP.

Belongs to the isocitrate and isopropylmalate dehydrogenases family. In terms of assembly, heterooligomer of subunits alpha (IDH3A), beta (IDH3B), and gamma (IDH3G) in the apparent ratio of 2:1:1. The heterodimer containing one IDH3A and one IDH3B subunit and the heterodimer containing one IDH3A and one IDH3G subunit assemble into a heterotetramer (which contains two subunits of IDH3A, one of IDH3B and one of IDH3G) and further into the heterooctamer. Mg(2+) is required as a cofactor. It depends on Mn(2+) as a cofactor.

The protein localises to the mitochondrion. Its activity is regulated as follows. The heterotetramer and the heterodimer composed of IDH3A and IDH3G subunits can be allosterically activated by citrate (CIT) or/and ADP, and the two activators can act independently or synergistically. The heterodimer composed of IDH3A and IDH3B subunits cannot be allosterically regulated and the allosteric regulation of the heterotetramer is through the IDH3G subunit and not the IDH3B subunit. The IDH3G subunit contains the allosteric site which consists of a CIT-binding site and an ADP-binding site, and the binding of CIT and ADP causes conformational changes at the allosteric site which are transmitted to the active site in the catalytic subunit (IDH3A) through a cascade of conformational changes at the heterodimer interface, leading to stabilization of the isocitrate-binding at the active site and thus activation of the enzyme. ATP can activate the heterotetramer and the heterodimer composed of IDH3A and IDH3G subunits at low concentrations but inhibits their activities at high concentrations, whereas ATP exhibits only inhibitory effect on the heterodimer composed of IDH3A and IDH3B subunits. Regulatory subunit which plays a role in the allosteric regulation of the enzyme catalyzing the decarboxylation of isocitrate (ICT) into alpha-ketoglutarate. The heterodimer composed of the alpha (IDH3A) and beta (IDH3B) subunits and the heterodimer composed of the alpha (IDH3A) and gamma (IDH3G) subunits, have considerable basal activity but the full activity of the heterotetramer (containing two subunits of IDH3A, one of IDH3B and one of IDH3G) requires the assembly and cooperative function of both heterodimers. The sequence is that of Isocitrate dehydrogenase [NAD] subunit gamma, mitochondrial (IDH3G) from Homo sapiens (Human).